Consider the following 238-residue polypeptide: tRNA (guanine-N(1)-)-methyltransferase (238 aa).

Residues glycine 110 and 129-134 each bind S-adenosyl-L-methionine; that span reads LGDFIL.

This sequence belongs to the RNA methyltransferase TrmD family. In terms of assembly, homodimer.

The protein resides in the cytoplasm. The catalysed reaction is guanosine(37) in tRNA + S-adenosyl-L-methionine = N(1)-methylguanosine(37) in tRNA + S-adenosyl-L-homocysteine + H(+). Functionally, specifically methylates guanosine-37 in various tRNAs. In Clostridium botulinum (strain Eklund 17B / Type B), this protein is tRNA (guanine-N(1)-)-methyltransferase.